Here is a 236-residue protein sequence, read N- to C-terminus: UPF0502 protein Bcen2424_5610 (236 aa).

It belongs to the UPF0502 family.

This Burkholderia cenocepacia (strain HI2424) protein is UPF0502 protein Bcen2424_5610.